The chain runs to 85 residues: Conotoxin Vx15a (85 aa).

Positions 1–23 (MEKLTVLILVATVLLTIQVLAQS) are cleaved as a signal peptide. A propeptide spanning residues 24 to 49 (DGDKHLMKRSKQYATKRLSALMRGHR) is cleaved from the precursor. Gln-50 is subject to Pyrrolidone carboxylic acid.

Belongs to the conotoxin O2 superfamily. In terms of processing, contains 4 disulfide bonds. In terms of tissue distribution, expressed by the venom duct.

It is found in the secreted. This is Conotoxin Vx15a from Conus vexillum (Flag cone).